A 218-amino-acid chain; its full sequence is Small ribosomal subunit protein uS3c (218 aa).

One can recognise a KH type-2 domain in the interval 47–118; that stretch reads VQKHMRVSSG…RLNIAITRVA (72 aa).

It belongs to the universal ribosomal protein uS3 family. In terms of assembly, part of the 30S ribosomal subunit.

The protein localises to the plastid. It is found in the chloroplast. This Illicium oligandrum (Star anise) protein is Small ribosomal subunit protein uS3c (rps3).